The chain runs to 314 residues: MATNKFFKSLLFTLTIAISSFGFCVENSSAYPVFAQQGYSNPRAANGKLACANCHLNQKAIEIEAPQGVLPNSVFEIEIKVPYDVNRQQISADGKPADLNVGGILILPKGFKLASKTQISPEVKAKNKGVFISPYSTEFDNILVVGPIAGKTHQELIFPVVAPDPENNPDVKYLTYPFYAGGNRGRGQVYPTGERSNINSFGATQGGQITEITTTEKGESKITIVNSDGATTSQTLSAGLKLLVKQGDIVKQDQPLNIDPNVGGFGQEESEIVLQSSSRILGYLAFCFCLLLTQVLLVLKKKQYEKVQAAELNF.

The signal sequence occupies residues 1 to 30; the sequence is MATNKFFKSLLFTLTIAISSFGFCVENSSA. Residues tyrosine 31, cysteine 51, cysteine 54, and histidine 55 each contribute to the heme site. Residues 280-300 traverse the membrane as a helical segment; it reads ILGYLAFCFCLLLTQVLLVLK.

This sequence belongs to the cytochrome f family. The 4 large subunits of the cytochrome b6-f complex are cytochrome b6, subunit IV (17 kDa polypeptide, petD), cytochrome f and the Rieske protein, while the 4 small subunits are PetG, PetL, PetM and PetN. The complex functions as a dimer. It depends on heme as a cofactor.

Its subcellular location is the plastid. It localises to the chloroplast thylakoid membrane. Component of the cytochrome b6-f complex, which mediates electron transfer between photosystem II (PSII) and photosystem I (PSI), cyclic electron flow around PSI, and state transitions. The polypeptide is Cytochrome f (Thalassiosira pseudonana (Marine diatom)).